We begin with the raw amino-acid sequence, 230 residues long: Ureidoacrylate amidohydrolase RutB (230 aa).

D24 functions as the Proton acceptor in the catalytic mechanism. The active site involves K133. C166 serves as the catalytic Nucleophile.

The protein belongs to the isochorismatase family. RutB subfamily.

It catalyses the reaction (Z)-3-ureidoacrylate + H2O + H(+) = (Z)-3-aminoacrylate + NH4(+) + CO2. It carries out the reaction (Z)-3-ureidoacrylate + H2O = (Z)-3-aminoacrylate + carbamate + H(+). The enzyme catalyses (Z)-2-methylureidoacrylate + H2O + H(+) = (Z)-2-methylaminoacrylate + NH4(+) + CO2. Hydrolyzes ureidoacrylate to form aminoacrylate and carbamate. The carbamate hydrolyzes spontaneously, thereby releasing one of the nitrogen atoms of the pyrimidine ring as ammonia and one of its carbon atoms as CO2. This Escherichia coli O6:K15:H31 (strain 536 / UPEC) protein is Ureidoacrylate amidohydrolase RutB.